A 393-amino-acid chain; its full sequence is uncharacterized protein (393 aa).

Residues C9, C15, C18, and C97 each contribute to the [4Fe-4S] cluster site. S-adenosyl-L-methionine-binding residues include Q231, Y258, E279, and D325. The active-site Nucleophile is the C352.

Belongs to the class I-like SAM-binding methyltransferase superfamily. RNA M5U methyltransferase family.

This is an uncharacterized protein from Leptospira interrogans serogroup Icterohaemorrhagiae serovar Lai (strain 56601).